We begin with the raw amino-acid sequence, 210 residues long: Large ribosomal subunit protein uL3 (210 aa).

This sequence belongs to the universal ribosomal protein uL3 family. As to quaternary structure, part of the 50S ribosomal subunit. Forms a cluster with proteins L14 and L19.

Its function is as follows. One of the primary rRNA binding proteins, it binds directly near the 3'-end of the 23S rRNA, where it nucleates assembly of the 50S subunit. This is Large ribosomal subunit protein uL3 from Solibacter usitatus (strain Ellin6076).